Consider the following 236-residue polypeptide: Alanyl-tRNA editing protein AlaX-M (236 aa).

Residues His101, His105, and His205 each contribute to the Zn(2+) site.

Belongs to the class-II aminoacyl-tRNA synthetase family. Editing domain AlaX-M subfamily. The cofactor is Zn(2+).

The protein resides in the cytoplasm. Its function is as follows. Functions in trans to edit the amino acid moiety from incorrectly charged Ser-tRNA(Ala). In Saccharolobus solfataricus (strain ATCC 35092 / DSM 1617 / JCM 11322 / P2) (Sulfolobus solfataricus), this protein is Alanyl-tRNA editing protein AlaX-M (alaXM).